We begin with the raw amino-acid sequence, 451 residues long: Protein SAR DEFICIENT 1 (451 aa).

Positions 149-270 are DNA-binding; that stretch reads DKWTSDEFES…AFHKKLSSRH (122 aa).

This sequence belongs to the plant ACBP60 protein family. In terms of assembly, (Microbial infection) Interacts with V.dahliae SCP41.

It is found in the nucleus. In terms of biological role, transcription activator that binds DNA in a sequence-specific manner, 5'-GAAATTTTGG-3', to promote the expression of target genes. Recruited to the promoter of ICS1 and other defense-related genes (e.g. PR1 and SID2) in response to both biotic (e.g. Pseudomonas syringae pv. maculicola ES4326) and abiotic stresses (e.g. UV-B), thus triggering slow defense responses by stimulating salicylic acid (SA) biosynthesis. Required for basal and systemic acquired resistance to P.syringae pv. maculicola and Hyaloperonospora arabidopsidis. In Arabidopsis thaliana (Mouse-ear cress), this protein is Protein SAR DEFICIENT 1.